The primary structure comprises 395 residues: Elongation factor Tu (395 aa).

The tr-type G domain maps to 10 to 204 (KEHANIGTIG…AVDDFIPTPE (195 aa)). Positions 19-26 (GHVDHGKT) are G1. 19–26 (GHVDHGKT) serves as a coordination point for GTP. A Mg(2+)-binding site is contributed by Thr26. Positions 60–64 (GITIN) are G2. Residues 81–84 (DCPG) are G3. GTP contacts are provided by residues 81-85 (DCPGH) and 136-139 (NKVD). The segment at 136–139 (NKVD) is G4. The segment at 174-176 (SAL) is G5.

It belongs to the TRAFAC class translation factor GTPase superfamily. Classic translation factor GTPase family. EF-Tu/EF-1A subfamily. In terms of assembly, monomer.

Its subcellular location is the cytoplasm. It carries out the reaction GTP + H2O = GDP + phosphate + H(+). GTP hydrolase that promotes the GTP-dependent binding of aminoacyl-tRNA to the A-site of ribosomes during protein biosynthesis. The polypeptide is Elongation factor Tu (Staphylococcus saprophyticus subsp. saprophyticus (strain ATCC 15305 / DSM 20229 / NCIMB 8711 / NCTC 7292 / S-41)).